Consider the following 367-residue polypeptide: MTETQFGGDEYDVSVSVSEAAVERALDVRPADVAPASSLTFARNVFVPLTTACRYTCTYCTYYDVPGEASLLTPEEIREQCRVGADAGCTEALFTFGDQPDDRYTAIHEQLGEWGYDSIHEYLRAACEIALEAGLLPHANPGDQTRAQMATVADVNASMGVMLETTADVQAHGGPRAKSPEQRLHTIDVAGDLGVPFTTGILVGIGEDWRDRAESLLAIRALHERHDHVQEVIVQPVRPNARWQGEPPGAETMRRVVAMARAVLPAEVGVQVPPNLTDVRGLVDCGVDDLGGVSPVTKDHINPDYAWPALDELSAIADHAGVPLRERLPVYERFLPADGGTADDGWVSQRIWRAIEDGDRYEAVRAE.

The 237-residue stretch at 39–275 folds into the Radical SAM core domain; the sequence is LTFARNVFVP…AEVGVQVPPN (237 aa). [4Fe-4S] cluster-binding residues include cysteine 53, cysteine 57, and cysteine 60.

It belongs to the radical SAM superfamily. CofG family. As to quaternary structure, consists of two subunits, CofG and CofH. It depends on [4Fe-4S] cluster as a cofactor.

The catalysed reaction is 5-amino-5-(4-hydroxybenzyl)-6-(D-ribitylimino)-5,6-dihydrouracil + S-adenosyl-L-methionine = 7,8-didemethyl-8-hydroxy-5-deazariboflavin + 5'-deoxyadenosine + L-methionine + NH4(+) + H(+). The protein operates within cofactor biosynthesis; coenzyme F0 biosynthesis. Catalyzes the radical-mediated synthesis of 7,8-didemethyl-8-hydroxy-5-deazariboflavin from 5-amino-5-(4-hydroxybenzyl)-6-(D-ribitylimino)-5,6-dihydrouracil. This Halobacterium salinarum (strain ATCC 29341 / DSM 671 / R1) protein is 7,8-didemethyl-8-hydroxy-5-deazariboflavin synthase.